The sequence spans 139 residues: Holo-[acyl-carrier-protein] synthase (139 aa).

The Mg(2+) site is built by D8 and E61.

Belongs to the P-Pant transferase superfamily. AcpS family. Mg(2+) is required as a cofactor.

The protein localises to the cytoplasm. The catalysed reaction is apo-[ACP] + CoA = holo-[ACP] + adenosine 3',5'-bisphosphate + H(+). Functionally, transfers the 4'-phosphopantetheine moiety from coenzyme A to a Ser of acyl-carrier-protein. The protein is Holo-[acyl-carrier-protein] synthase of Nitrobacter winogradskyi (strain ATCC 25391 / DSM 10237 / CIP 104748 / NCIMB 11846 / Nb-255).